The primary structure comprises 691 residues: Hormonally up-regulated neu tumor-associated kinase homolog A (691 aa).

The Protein kinase domain occupies 55–313 (YLIGRKLGEG…IQQALANRWL (259 aa)). Residues 61 to 69 (LGEGSFAKV) and lysine 84 each bind ATP. The active-site Proton acceptor is aspartate 179. Basic and acidic residues predominate over residues 406 to 425 (MNKNSYEERRSKDLEKRGEP). Disordered regions lie at residues 406-475 (MNKN…GGLS), 499-518 (QSPD…HSQE), 580-640 (FQFD…SRGR), and 655-679 (QVVS…SPGY). Residues 440–453 (SHRQNACLTPQGHS) are compositionally biased toward polar residues. A compositionally biased stretch (basic and acidic residues) spans 457–470 (PVKERRSSKSERES). The span at 582–597 (FDNTSPSKSHFNQASF) shows a compositional bias: polar residues. Over residues 604–620 (SPSSPESMSPTSPHSPS) the composition is skewed to low complexity. Positions 621 to 631 (CNNNISGNLGS) are enriched in polar residues.

Belongs to the protein kinase superfamily. CAMK Ser/Thr protein kinase family. SNF1 subfamily.

The catalysed reaction is L-seryl-[protein] + ATP = O-phospho-L-seryl-[protein] + ADP + H(+). The enzyme catalyses L-threonyl-[protein] + ATP = O-phospho-L-threonyl-[protein] + ADP + H(+). The chain is Hormonally up-regulated neu tumor-associated kinase homolog A (hunk-a) from Xenopus laevis (African clawed frog).